The chain runs to 2548 residues: Variant-silencing SET domain-containing protein (2548 aa).

The span at 37–48 shows a compositional bias: acidic residues; sequence IDDDDDDDNDNN. Disordered stretches follow at residues 37–61, 336–379, and 585–629; these read IDDD…KTNN, GDPK…DDDN, and SVDR…NTQT. The segment covering 336–357 has biased composition (basic and acidic residues); it reads GDPKKRIERNKQEIEDHRREQD. Over residues 358–378 the composition is skewed to acidic residues; that stretch reads GENDQEEDNYDDYDDEDDDDD. Positions 602–616 are enriched in low complexity; that stretch reads NGSNNNNSSSNNNNN. The span at 617-629 shows a compositional bias: polar residues; sequence ITHITNDCDNTQT. A PHD-type 1 zinc finger spans residues 787 to 846; that stretch reads FYLCEFCEQNIFDMNNMIKKDKAKECMYRCNISCGRTFHKACVCYIKNNDNYICFFCLYD. The segment covering 929–944 has biased composition (basic residues); the sequence is IKRRHIYRKRRRRGPR. Disordered stretches follow at residues 929 to 1054, 1546 to 1575, 1713 to 1732, and 1772 to 1822; these read IKRR…CDEN, EKNT…NTLD, EQGS…NNAK, and INNA…DDHR. Residues 986-1016 are compositionally biased toward acidic residues; sequence DNNDDNNDNNDDNNDNNDDNNDNNDNNDDNN. Composition is skewed to low complexity over residues 1017–1050 and 1551–1572; these read NDNN…NNNN and NKLC…TKYN. Positions 1714 to 1732 are enriched in polar residues; the sequence is QGSINNAKHNEQGSINNAK. The region spanning 2067-2117 is the AWS domain; sequence SDDYKCLCQGECNLYTCYNSLSNIQCSKSRCNLPEKIQDRKCFNRPFRKSF. The SET domain occupies 2119–2240; sequence KDLEIKKTEK…SGEEITYNYS (122 aa). Y2239 contributes to the S-adenosyl-L-methionine binding site. A PHD-type 2 zinc finger spans residues 2423 to 2471; sequence DEVCRKCKSCGNLTMCDKCFQSYHQLCGNMHSKMYKNNELVLCRFCQKY.

It belongs to the class V-like SAM-binding methyltransferase superfamily.

Its subcellular location is the nucleus. It is found in the chromosome. The enzyme catalyses L-lysyl(36)-[histone H3] + 3 S-adenosyl-L-methionine = N(6),N(6),N(6)-trimethyl-L-lysyl(36)-[histone H3] + 3 S-adenosyl-L-homocysteine + 3 H(+). Its function is as follows. Histone methyltransferase that specifically represses expression of the surface antigen-coding var genes by mediating trimethylation of 'Lys-36' of histone H3 (H3K36me3) on var genes. SETVS-dependent H3K36me3 is specifically involved in var genes silencing, a central step malaria pathogenesis: each parasite contains 60 distinct var genes that each code for a different PfEMP1 protein. During infection, the clonal parasite population expresses only 1 gene at a time, while the 59 other var genes are silenced. The parasite then switches to the expression of a new variant antigen as an immune-evasion mechanism to avoid the host antibody response. Represses expression of both var mRNA and antisense long non-coding RNA. This Plasmodium falciparum (isolate 3D7) protein is Variant-silencing SET domain-containing protein (SETVS).